The following is a 152-amino-acid chain: Flagellar assembly factor FliW (152 aa).

The protein belongs to the FliW family. Interacts with translational regulator CsrA and flagellin(s).

It localises to the cytoplasm. Acts as an anti-CsrA protein, binds CsrA and prevents it from repressing translation of its target genes, one of which is flagellin. Binds to flagellin and participates in the assembly of the flagellum. The sequence is that of Flagellar assembly factor FliW from Desulfitobacterium hafniense (strain DSM 10664 / DCB-2).